A 174-amino-acid polypeptide reads, in one-letter code: Crossover junction endodeoxyribonuclease RuvC (174 aa).

Residues Asp8, Glu68, and Asp140 contribute to the active site. 3 residues coordinate Mg(2+): Asp8, Glu68, and Asp140.

Belongs to the RuvC family. In terms of assembly, homodimer which binds Holliday junction (HJ) DNA. The HJ becomes 2-fold symmetrical on binding to RuvC with unstacked arms; it has a different conformation from HJ DNA in complex with RuvA. In the full resolvosome a probable DNA-RuvA(4)-RuvB(12)-RuvC(2) complex forms which resolves the HJ. It depends on Mg(2+) as a cofactor.

Its subcellular location is the cytoplasm. It catalyses the reaction Endonucleolytic cleavage at a junction such as a reciprocal single-stranded crossover between two homologous DNA duplexes (Holliday junction).. Functionally, the RuvA-RuvB-RuvC complex processes Holliday junction (HJ) DNA during genetic recombination and DNA repair. Endonuclease that resolves HJ intermediates. Cleaves cruciform DNA by making single-stranded nicks across the HJ at symmetrical positions within the homologous arms, yielding a 5'-phosphate and a 3'-hydroxyl group; requires a central core of homology in the junction. The consensus cleavage sequence is 5'-(A/T)TT(C/G)-3'. Cleavage occurs on the 3'-side of the TT dinucleotide at the point of strand exchange. HJ branch migration catalyzed by RuvA-RuvB allows RuvC to scan DNA until it finds its consensus sequence, where it cleaves and resolves the cruciform DNA. The chain is Crossover junction endodeoxyribonuclease RuvC from Legionella pneumophila (strain Paris).